Here is a 364-residue protein sequence, read N- to C-terminus: Histidinol-phosphate aminotransferase 1 (364 aa).

K211 bears the N6-(pyridoxal phosphate)lysine mark.

The protein belongs to the class-II pyridoxal-phosphate-dependent aminotransferase family. Histidinol-phosphate aminotransferase subfamily. In terms of assembly, homodimer. It depends on pyridoxal 5'-phosphate as a cofactor.

The enzyme catalyses L-histidinol phosphate + 2-oxoglutarate = 3-(imidazol-4-yl)-2-oxopropyl phosphate + L-glutamate. The protein operates within amino-acid biosynthesis; L-histidine biosynthesis; L-histidine from 5-phospho-alpha-D-ribose 1-diphosphate: step 7/9. The chain is Histidinol-phosphate aminotransferase 1 from Legionella pneumophila (strain Paris).